A 396-amino-acid chain; its full sequence is S-arrestin (396 aa).

Belongs to the arrestin family.

Its function is as follows. Arrestin is one of the major proteins of the ros (retinal rod outer segments); it binds to photoactivated-phosphorylated rhodopsin, thereby apparently preventing the transducin-mediated activation of phosphodiesterase. The chain is S-arrestin from Lithobates pipiens (Northern leopard frog).